Here is a 244-residue protein sequence, read N- to C-terminus: Venom nerve growth factor 1 (244 aa).

An N-terminal signal peptide occupies residues 1-18 (MSMLCYTLIIAFLIGIWA). A propeptide spanning residues 19–125 (APKSEDNVPL…TLNRNIRAKR (107 aa)) is cleaved from the precursor. Residues 47–66 (GLKTSRNTDQRHPAPKKAED) are compositionally biased toward basic and acidic residues. Residues 47 to 67 (GLKTSRNTDQRHPAPKKAEDQ) are disordered. 3 disulfides stabilise this stretch: Cys139-Cys205, Cys181-Cys233, and Cys193-Cys235.

This sequence belongs to the NGF-beta family. In terms of assembly, homodimer; non-covalently linked. Expressed by the venom gland.

Its subcellular location is the secreted. In terms of biological role, nerve growth factor is important for the development and maintenance of the sympathetic and sensory nervous systems. It stimulates division and differentiation of sympathetic and embryonic sensory neurons as well as basal forebrain cholinergic neurons in the brain. Its relevance in the snake venom is not clear. However, it has been shown to inhibit metalloproteinase-dependent proteolysis of platelet glycoprotein Ib alpha, suggesting a metalloproteinase inhibition to prevent metalloprotease autodigestion and/or protection against prey proteases. Binds a lipid between the two protein chains in the homodimer. The lipid-bound form promotes histamine relase from mouse mast cells, contrary to the lipid-free form. The polypeptide is Venom nerve growth factor 1 (Notechis scutatus scutatus (Mainland tiger snake)).